Reading from the N-terminus, the 154-residue chain is MAL-like protein (154 aa).

A run of 4 helical transmembrane segments spans residues leucine 24–tryptophan 44, valine 61–phenylalanine 81, glycine 99–serine 119, and valine 131–isoleucine 151. Residues leucine 24–histidine 154 form the MARVEL domain.

It belongs to the MAL family.

The protein localises to the membrane. The sequence is that of MAL-like protein (Mall) from Mus musculus (Mouse).